We begin with the raw amino-acid sequence, 184 residues long: dCTP deaminase (184 aa).

DCTP-binding positions include 97–102 (RSTFAR) and D113. E123 serves as the catalytic Proton donor/acceptor. Residues Y155 and Q162 each contribute to the dCTP site.

Belongs to the dCTP deaminase family. As to quaternary structure, homotrimer.

The catalysed reaction is dCTP + H2O + H(+) = dUTP + NH4(+). It participates in pyrimidine metabolism; dUMP biosynthesis; dUMP from dCTP (dUTP route): step 1/2. In terms of biological role, catalyzes the deamination of dCTP to dUTP. This chain is dCTP deaminase, found in Saccharolobus solfataricus (strain ATCC 35092 / DSM 1617 / JCM 11322 / P2) (Sulfolobus solfataricus).